The sequence spans 269 residues: Tryptophan synthase alpha chain (269 aa).

Residues glutamate 49 and aspartate 60 each act as proton acceptor in the active site.

Belongs to the TrpA family. In terms of assembly, tetramer of two alpha and two beta chains.

It catalyses the reaction (1S,2R)-1-C-(indol-3-yl)glycerol 3-phosphate + L-serine = D-glyceraldehyde 3-phosphate + L-tryptophan + H2O. Its pathway is amino-acid biosynthesis; L-tryptophan biosynthesis; L-tryptophan from chorismate: step 5/5. In terms of biological role, the alpha subunit is responsible for the aldol cleavage of indoleglycerol phosphate to indole and glyceraldehyde 3-phosphate. In Pseudomonas fluorescens (strain SBW25), this protein is Tryptophan synthase alpha chain.